We begin with the raw amino-acid sequence, 142 residues long: Large ribosomal subunit protein uL11 (142 aa).

Belongs to the universal ribosomal protein uL11 family. As to quaternary structure, part of the ribosomal stalk of the 50S ribosomal subunit. Interacts with L10 and the large rRNA to form the base of the stalk. L10 forms an elongated spine to which L12 dimers bind in a sequential fashion forming a multimeric L10(L12)X complex. Post-translationally, one or more lysine residues are methylated.

Its function is as follows. Forms part of the ribosomal stalk which helps the ribosome interact with GTP-bound translation factors. The sequence is that of Large ribosomal subunit protein uL11 from Proteus vulgaris.